The primary structure comprises 234 residues: Glucosamine-6-phosphate deaminase (234 aa).

Asp62 acts as the Proton acceptor; for enolization step in catalysis. Catalysis depends on Asn128, which acts as the For ring-opening step. His130 acts as the Proton acceptor; for ring-opening step in catalysis. Glu135 functions as the For ring-opening step in the catalytic mechanism.

It belongs to the glucosamine/galactosamine-6-phosphate isomerase family. NagB subfamily.

The catalysed reaction is alpha-D-glucosamine 6-phosphate + H2O = beta-D-fructose 6-phosphate + NH4(+). The protein operates within amino-sugar metabolism; N-acetylneuraminate degradation; D-fructose 6-phosphate from N-acetylneuraminate: step 5/5. Its function is as follows. Catalyzes the reversible isomerization-deamination of glucosamine 6-phosphate (GlcN6P) to form fructose 6-phosphate (Fru6P) and ammonium ion. The sequence is that of Glucosamine-6-phosphate deaminase from Streptococcus pyogenes serotype M3 (strain ATCC BAA-595 / MGAS315).